The primary structure comprises 193 residues: Large ribosomal subunit protein bL25 (193 aa).

It belongs to the bacterial ribosomal protein bL25 family. CTC subfamily. In terms of assembly, part of the 50S ribosomal subunit; part of the 5S rRNA/L5/L18/L25 subcomplex. Contacts the 5S rRNA. Binds to the 5S rRNA independently of L5 and L18.

Functionally, this is one of the proteins that binds to the 5S RNA in the ribosome where it forms part of the central protuberance. In Lachnoclostridium phytofermentans (strain ATCC 700394 / DSM 18823 / ISDg) (Clostridium phytofermentans), this protein is Large ribosomal subunit protein bL25.